Reading from the N-terminus, the 451-residue chain is Proline--tRNA ligase (451 aa).

It belongs to the class-II aminoacyl-tRNA synthetase family. ProS type 2 subfamily. As to quaternary structure, homodimer.

It localises to the cytoplasm. The enzyme catalyses tRNA(Pro) + L-proline + ATP = L-prolyl-tRNA(Pro) + AMP + diphosphate. Its function is as follows. Catalyzes the attachment of proline to tRNA(Pro) in a two-step reaction: proline is first activated by ATP to form Pro-AMP and then transferred to the acceptor end of tRNA(Pro). The polypeptide is Proline--tRNA ligase (Ruegeria sp. (strain TM1040) (Silicibacter sp.)).